The primary structure comprises 354 residues: tRNA N6-adenosine threonylcarbamoyltransferase (354 aa).

Fe cation contacts are provided by His111 and His115. Residues 134–138 (LVSGG), Asp167, Gly180, and Asn279 each bind substrate. Residue Asp319 coordinates Fe cation.

It belongs to the KAE1 / TsaD family. Fe(2+) is required as a cofactor.

The protein resides in the cytoplasm. The enzyme catalyses L-threonylcarbamoyladenylate + adenosine(37) in tRNA = N(6)-L-threonylcarbamoyladenosine(37) in tRNA + AMP + H(+). In terms of biological role, required for the formation of a threonylcarbamoyl group on adenosine at position 37 (t(6)A37) in tRNAs that read codons beginning with adenine. Is involved in the transfer of the threonylcarbamoyl moiety of threonylcarbamoyl-AMP (TC-AMP) to the N6 group of A37, together with TsaE and TsaB. TsaD likely plays a direct catalytic role in this reaction. The protein is tRNA N6-adenosine threonylcarbamoyltransferase of Neisseria meningitidis serogroup B (strain ATCC BAA-335 / MC58).